The sequence spans 263 residues: Shikimate dehydrogenase (NADP(+)) (263 aa).

Residues 14 to 16 (SLS) and threonine 60 each bind shikimate. Lysine 64 functions as the Proton acceptor in the catalytic mechanism. Shikimate-binding residues include asparagine 85 and aspartate 100. NADP(+) is bound by residues 123 to 127 (GAGGA), 146 to 151 (NRTPQR), and leucine 205. Residue tyrosine 207 participates in shikimate binding. NADP(+) is bound at residue glycine 228. Residue glutamine 235 coordinates shikimate.

The protein belongs to the shikimate dehydrogenase family. As to quaternary structure, homodimer.

It catalyses the reaction shikimate + NADP(+) = 3-dehydroshikimate + NADPH + H(+). Its pathway is metabolic intermediate biosynthesis; chorismate biosynthesis; chorismate from D-erythrose 4-phosphate and phosphoenolpyruvate: step 4/7. In terms of biological role, involved in the biosynthesis of the chorismate, which leads to the biosynthesis of aromatic amino acids. Catalyzes the reversible NADPH linked reduction of 3-dehydroshikimate (DHSA) to yield shikimate (SA). The chain is Shikimate dehydrogenase (NADP(+)) from Thermus thermophilus (strain ATCC 27634 / DSM 579 / HB8).